The primary structure comprises 204 residues: Large ribosomal subunit protein uL22c (204 aa).

Belongs to the universal ribosomal protein uL22 family. In terms of assembly, part of the 50S ribosomal subunit.

It localises to the plastid. It is found in the chloroplast. In terms of biological role, this protein binds specifically to 23S rRNA. Functionally, the globular domain of the protein is located near the polypeptide exit tunnel on the outside of the subunit, while an extended beta-hairpin is found that lines the wall of the exit tunnel in the center of the 70S ribosome. This Pisum sativum (Garden pea) protein is Large ribosomal subunit protein uL22c (rpl22).